Consider the following 424-residue polypeptide: Glutamyl-tRNA(Gln) amidotransferase subunit D (424 aa).

Positions 58-79 (NTNGGLNGGKEHKTAGEEVQKS) are disordered. Basic and acidic residues predominate over residues 66–78 (GKEHKTAGEEVQK). One can recognise an Asparaginase/glutaminase domain in the interval 84–406 (PKVAILSTGG…LGQTDEFNEA (323 aa)). Active-site residues include T94, T170, D171, and K247.

It belongs to the asparaginase 1 family. GatD subfamily. As to quaternary structure, heterodimer of GatD and GatE.

The enzyme catalyses L-glutamyl-tRNA(Gln) + L-glutamine + ATP + H2O = L-glutaminyl-tRNA(Gln) + L-glutamate + ADP + phosphate + H(+). Allows the formation of correctly charged Gln-tRNA(Gln) through the transamidation of misacylated Glu-tRNA(Gln) in organisms which lack glutaminyl-tRNA synthetase. The reaction takes place in the presence of glutamine and ATP through an activated gamma-phospho-Glu-tRNA(Gln). The GatDE system is specific for glutamate and does not act on aspartate. This is Glutamyl-tRNA(Gln) amidotransferase subunit D from Methanosarcina barkeri (strain Fusaro / DSM 804).